A 267-amino-acid chain; its full sequence is Indole-3-glycerol phosphate synthase (267 aa).

It belongs to the TrpC family.

The catalysed reaction is 1-(2-carboxyphenylamino)-1-deoxy-D-ribulose 5-phosphate + H(+) = (1S,2R)-1-C-(indol-3-yl)glycerol 3-phosphate + CO2 + H2O. Its pathway is amino-acid biosynthesis; L-tryptophan biosynthesis; L-tryptophan from chorismate: step 4/5. The sequence is that of Indole-3-glycerol phosphate synthase from Ralstonia pickettii (strain 12J).